Reading from the N-terminus, the 172-residue chain is Adenine phosphoribosyltransferase (172 aa).

It belongs to the purine/pyrimidine phosphoribosyltransferase family. As to quaternary structure, homodimer.

The protein resides in the cytoplasm. It catalyses the reaction AMP + diphosphate = 5-phospho-alpha-D-ribose 1-diphosphate + adenine. It participates in purine metabolism; AMP biosynthesis via salvage pathway; AMP from adenine: step 1/1. Functionally, catalyzes a salvage reaction resulting in the formation of AMP, that is energically less costly than de novo synthesis. This Parasynechococcus marenigrum (strain WH8102) protein is Adenine phosphoribosyltransferase.